The chain runs to 354 residues: Protein Wnt-11 (354 aa).

Positions 1–23 (MTEYRNFLLLFITSLSVIYPCTG) are cleaved as a signal peptide. Residues asparagine 32, asparagine 39, and asparagine 89 are each glycosylated (N-linked (GlcNAc...) asparagine). Intrachain disulfides connect cysteine 129–cysteine 137, cysteine 139–cysteine 156, cysteine 209–cysteine 223, cysteine 211–cysteine 218, cysteine 283–cysteine 314, cysteine 299–cysteine 309, cysteine 329–cysteine 344, cysteine 331–cysteine 341, and cysteine 336–cysteine 337. The O-palmitoleoyl serine; by PORCN moiety is linked to residue serine 215. Asparagine 300 carries an N-linked (GlcNAc...) asparagine glycan.

It belongs to the Wnt family. Post-translationally, palmitoleoylation is required for efficient binding to frizzled receptors. Depalmitoleoylation leads to Wnt signaling pathway inhibition.

It is found in the secreted. It localises to the extracellular space. Its subcellular location is the extracellular matrix. In terms of biological role, ligand for fzd5, a member of the G-protein coupled frizzled receptor family. Plays a role in early eye development, possibly through wnt non-canonical signaling. Promotes eye formation, at least partially, by antagonizing the Wnt/beta-catenin pathway. In addition, promotes coherence of eye field cells, potentially contributing to the coordinated morphogenetic behaviors of cells in the nascent eye field. This Danio rerio (Zebrafish) protein is Protein Wnt-11 (wnt11).